The sequence spans 627 residues: Lactose permease (627 aa).

The segment at Met-1–Gln-460 is permease. 12 helical membrane passes run Ala-13–Val-33, Ile-46–Leu-66, Trp-84–Gly-104, Pro-111–Phe-131, Val-159–Phe-179, Trp-193–Leu-213, Leu-244–Leu-264, Leu-281–Ala-301, Leu-309–Gly-329, Val-336–Ile-356, Trp-392–Ile-412, and Val-419–Phe-439. The PTS EIIA type-1 domain occupies Asp-493–Asn-597. His-545 is subject to Phosphohistidine; by HPr.

The protein in the N-terminal section; belongs to the sodium:galactoside symporter (TC 2.A.2) family.

It is found in the cell membrane. Responsible for transport of beta-galactosides into the cell, with the concomitant uptake of protons (symport system), and also for transport of homologous and heterologous exchange of beta-galactosides. This chain is Lactose permease (lacY), found in Lactobacillus delbrueckii subsp. bulgaricus (strain ATCC 11842 / DSM 20081 / BCRC 10696 / JCM 1002 / NBRC 13953 / NCIMB 11778 / NCTC 12712 / WDCM 00102 / Lb 14).